The primary structure comprises 166 residues: Phosphopantetheine adenylyltransferase (166 aa).

Ser-9 provides a ligand contact to substrate. ATP-binding positions include 9–10 (SF) and His-17. Substrate-binding residues include Lys-41, Leu-74, and Lys-88. ATP contacts are provided by residues 89–91 (GLR), Glu-99, and 123–129 (YVHLSST).

This sequence belongs to the bacterial CoaD family. In terms of assembly, homohexamer. Requires Mg(2+) as cofactor.

Its subcellular location is the cytoplasm. The catalysed reaction is (R)-4'-phosphopantetheine + ATP + H(+) = 3'-dephospho-CoA + diphosphate. It functions in the pathway cofactor biosynthesis; coenzyme A biosynthesis; CoA from (R)-pantothenate: step 4/5. Functionally, reversibly transfers an adenylyl group from ATP to 4'-phosphopantetheine, yielding dephospho-CoA (dPCoA) and pyrophosphate. This is Phosphopantetheine adenylyltransferase from Paenarthrobacter aurescens (strain TC1).